Consider the following 66-residue polypeptide: Toxin NaTx-4 (66 aa).

Positions 1 to 64 constitute an LCN-type CS-alpha/beta domain; it reads KEGYLVNKET…TFPIPGKTCS (64 aa). Disulfide bonds link cysteine 12/cysteine 63, cysteine 16/cysteine 39, cysteine 25/cysteine 44, and cysteine 29/cysteine 46.

Belongs to the long (4 C-C) scorpion toxin superfamily. Sodium channel inhibitor family. As to expression, expressed by the venom gland.

The protein localises to the secreted. In terms of biological role, probable sodium channel inhibitor. This is Toxin NaTx-4 from Centruroides sculpturatus (Arizona bark scorpion).